A 126-amino-acid polypeptide reads, in one-letter code: Holo-[acyl-carrier-protein] synthase (126 aa).

Mg(2+) is bound by residues D9 and E58.

Belongs to the P-Pant transferase superfamily. AcpS family. Mg(2+) serves as cofactor.

The protein resides in the cytoplasm. The catalysed reaction is apo-[ACP] + CoA = holo-[ACP] + adenosine 3',5'-bisphosphate + H(+). Transfers the 4'-phosphopantetheine moiety from coenzyme A to a Ser of acyl-carrier-protein. The chain is Holo-[acyl-carrier-protein] synthase from Escherichia coli O127:H6 (strain E2348/69 / EPEC).